The chain runs to 4558 residues: Multifunctional-autoprocessing repeats-in-toxin (4558 aa).

An N-terminal signal peptide occupies residues 1–32; that stretch reads MVFYLIPKRRVWLMGKPFWRSVEYFFTGNYSA. 39 RtxA repeats span residues 114–131, 134–151, 154–170, 174–197, 200–217, 220–237, 268–285, 288–304, 594–611, 614–630, 634–651, 654–668, 751–763, 769–781, 792–808, 811–826, 830–845, 851–865, 868–885, 887–901, 906–920, 925–942, 944–960, 982–994, 1001–1016, 1041–1053, 1077–1089, 1097–1112, 1120–1132, 1135–1152, 1155–1169, 1173–1189, 1194–1209, 1211–1227, 1230–1246, 1252–1266, 1268–1285, 1306–1323, and 1325–1342; these read GAAG…GDVS, GAAA…GNVT, GAGG…QGNL, GAGA…GDVT, GAGA…GNIT, GAGA…GDIT, GVGG…GDIH, GGGA…GNDF, GAGG…GNVH, GGGI…FGNT, GGGA…GDLT, GAGL…SEQG, AGGA…MGEG, MLGG…HISN, ALGG…GNTL, MGGG…DGTT, MVGG…NGDT, GVGN…GQTL, MGAA…TSIA, MIGA…GEGN, MGGL…GNGD, MVAE…MSVA, MLAK…GTTL, MIGQ…KVGN, MVGK…DGTS, GKAN…GDGL, AAAK…HVGD, AGKG…GTTV, GNVM…GTTI, AKGK…LGVN, WGQA…DGDR, AKGE…GQEV, GEAN…DDYT, AWGK…GQNV, AKGE…GDSF, KGNI…MQVT, AKGQ…LNVT, AWGK…LNVA, and MKGK…LNIN. Disordered regions lie at residues 1623 to 1688, 1752 to 1779, and 1791 to 1890; these read HATQ…KEES, TLSD…QNRA, and DAEK…NADG. Polar residues predominate over residues 1625 to 1634; it reads TQNPAAQNAL. Positions 1635–1654 are enriched in basic and acidic residues; sequence SDKERAEADRQRLEQEKQKQ. Residues 1660–1679 show a composition bias toward polar residues; it reads GSQSQLESTDQQALENNGQA. Positions 1791-1815 are enriched in basic and acidic residues; the sequence is DAEKRKADALAKGKDAQQAESDAHH. A compositionally biased stretch (polar residues) spans 1879–1888; that stretch reads HVNTDSQTNA. An ACD domain is found at 1988-2422; that stretch reads VPGFKSHFAS…HAEQWAKITA (435 aa). 1999–2003 provides a ligand contact to ATP; it reads SIGIE. Mg(2+) contacts are provided by Glu2003, Glu2065, and Gln2149. Arg2255 serves as a coordination point for ATP. Glu2326 serves as a coordination point for Mg(2+). Residues 2574–2658 are membrane localization region (MLD); that stretch reads ELMSVTELLD…SLLNQVNTRL (85 aa). Residues 2734–3098 form a rho inactivation domain (RID) region; it reads EYGQTVADTI…HQVTDVLDAL (365 aa). Residues 3195–3310 form an ABH effector region region; the sequence is VVLFLHGSGS…MPSMTKAITA (116 aa). Residues 3404 to 3426 form a disordered region; that stretch reads ASVDEDLDQQGLDTTSTKDQGIS. Positions 3414-3426 are enriched in polar residues; the sequence is GLDTTSTKDQGIS. The Peptidase C80 domain occupies 3462 to 3646; sequence PTTDGGETRF…AENNKVSLSW (185 aa). Residues 3468-3470, 3495-3496, and Arg3526 contribute to the 1D-myo-inositol hexakisphosphate site; these read ETR and KH. His3532 acts as the For cysteine protease activity in catalysis. Ser3577 is a 1D-myo-inositol hexakisphosphate binding site. Residue Cys3581 is the Nucleophile; for cysteine protease activity of the active site. Residues 3610-3612, 3623-3624, Lys3636, and Lys3641 each bind 1D-myo-inositol hexakisphosphate; these read SVR and RK.

The cofactor is Mg(2+).

It is found in the secreted. The protein localises to the host cytoplasm. The protein resides in the host cytosol. It localises to the host cell membrane. The enzyme catalyses L-lysyl-/S-(2E,6E,10E)-geranylgeranyl-L-cysteinyl-[protein] + hexadecanoyl-CoA = N(6)-hexadecanoyl-L-lysyl-/S-(2E,6E,10E)-geranylgeranyl-L-cysteinyl-[protein] + CoA + H(+). It catalyses the reaction L-lysyl-/S-(2E,6E,10E)-geranylgeranyl-L-cysteinyl-[protein] + dodecanoyl-CoA = N(6)-dodecanoyl-L-lysyl-/S-(2E,6E,10E)-geranylgeranyl-L-cysteinyl-[protein] + CoA + H(+). It carries out the reaction L-lysyl-/S-(2E,6E,10E)-geranylgeranyl-L-cysteinyl-[protein] + decanoyl-CoA = N(6)-decanoyl-L-lysyl-/S-(2E,6E,10E)-geranylgeranyl-L-cysteinyl-[protein] + CoA + H(+). With respect to regulation, protease activity is inhibited by N-ethylmaleimide but not other protease inhibitors. Protease activity is inhibited by aza-leucine epoxide. Protease activity is activated upon binding inositol hexakisphosphate (InsP6) via an allosteric mechanism: the active site is disordered or occluded in the absence of InsP6, protecting the protease active-site sulfhydryl until the toxin enters a eukaryotic cell. Upon processing at the Leu-3441-Ala-3442 site, the peptidase C80 domain is converted to a form with much reduced affinity for InsP6, but is reactivated for high affinity binding of InsP6 by cooperative binding of both a new substrate and InsP6. Reactivation allows cleavage at other sites, specifically at Leu residues between the effector domains. In terms of biological role, precursor of a multifunctional toxin that causes destruction of the actin cytoskeleton by covalent cross-linking of actin and inactivation of Rho GTPases when translocated into the host cytoplasm. Upon translocation into the host cell, undergoes autoprocessing in cis mediated by the peptidase C80 domain (also named CPD domain): the protease activity is activated upon binding inositol hexakisphosphate (InsP6) present at the host cell membrane and delivers the Cysteine protease domain-containing toxin F3 chain to the host cytosol. The Cysteine protease domain-containing toxin F3 chain will then further cleave and release effector toxin chains that cause disassembly of the actin cytoskeleton and enhance V.cholerae colonization of the small intestine, possibly by facilitating evasion of phagocytic cells. Functionally, following autocatalytic cleavage in cis at the Leu-3441-Ala-3442 site, this chain mediates processing in trans to release other individual toxin chains to the host cytosol. Released effector toxin chains cause disassembly of the actin cytoskeleton and enhance V.cholerae colonization of the small intestine, possibly by facilitating evasion of phagocytic cells. Actin-directed toxin that catalyzes the covalent cross-linking of host cytoplasmic monomeric actin. Mediates the cross-link between 'Lys-50' of one monomer and 'Glu-270' of another actin monomer, resulting in formation of highly toxic actin oligomers that cause cell rounding. The toxin can be highly efficient at very low concentrations by acting on formin homology family proteins: toxic actin oligomers bind with high affinity to formins and adversely affect both nucleation and elongation abilities of formins, causing their potent inhibition in both profilin-dependent and independent manners. Acts as an acid--amino-acid ligase that transfers the gamma-phosphoryl group of ATP to the 'Glu-270' actin residue, resulting in the formation of an activated acyl phosphate intermediate. This intermediate is further hydrolyzed and the energy of hydrolysis is utilized for the formation of the amide bond between actin subunits. Its function is as follows. N-epsilon-fatty acyltransferase that mediates lysine-palmitoylation of host Rho GTPase proteins, with a strong preference for host Rac1. After delivery to the host cytosol, localizes to the host cell membrane where it palmitoylates host Rho GTPase proteins, resulting in loss of all active GTP-bound Rho and subsequent actin depolymerization. Prenylation of host Rac1 at the C-terminus is required for lysine-palmitoylation. In terms of biological role, indirectly activates the small GTPase CDC42. The protein is Multifunctional-autoprocessing repeats-in-toxin of Vibrio cholerae serotype O1 (strain ATCC 39315 / El Tor Inaba N16961).